The primary structure comprises 393 residues: NAD(P)H-quinone oxidoreductase subunit H, chloroplastic (393 aa).

The protein belongs to the complex I 49 kDa subunit family. As to quaternary structure, NDH is composed of at least 16 different subunits, 5 of which are encoded in the nucleus.

It is found in the plastid. Its subcellular location is the chloroplast thylakoid membrane. It carries out the reaction a plastoquinone + NADH + (n+1) H(+)(in) = a plastoquinol + NAD(+) + n H(+)(out). The catalysed reaction is a plastoquinone + NADPH + (n+1) H(+)(in) = a plastoquinol + NADP(+) + n H(+)(out). Its function is as follows. NDH shuttles electrons from NAD(P)H:plastoquinone, via FMN and iron-sulfur (Fe-S) centers, to quinones in the photosynthetic chain and possibly in a chloroplast respiratory chain. The immediate electron acceptor for the enzyme in this species is believed to be plastoquinone. Couples the redox reaction to proton translocation, and thus conserves the redox energy in a proton gradient. The chain is NAD(P)H-quinone oxidoreductase subunit H, chloroplastic from Oenothera biennis (German evening primrose).